The chain runs to 245 residues: 1-(5-phosphoribosyl)-5-[(5-phosphoribosylamino)methylideneamino] imidazole-4-carboxamide isomerase (245 aa).

Asp-13 functions as the Proton acceptor in the catalytic mechanism. Asp-132 functions as the Proton donor in the catalytic mechanism.

It belongs to the HisA/HisF family.

The protein localises to the cytoplasm. The catalysed reaction is 1-(5-phospho-beta-D-ribosyl)-5-[(5-phospho-beta-D-ribosylamino)methylideneamino]imidazole-4-carboxamide = 5-[(5-phospho-1-deoxy-D-ribulos-1-ylimino)methylamino]-1-(5-phospho-beta-D-ribosyl)imidazole-4-carboxamide. The protein operates within amino-acid biosynthesis; L-histidine biosynthesis; L-histidine from 5-phospho-alpha-D-ribose 1-diphosphate: step 4/9. This chain is 1-(5-phosphoribosyl)-5-[(5-phosphoribosylamino)methylideneamino] imidazole-4-carboxamide isomerase, found in Frankia alni (strain DSM 45986 / CECT 9034 / ACN14a).